We begin with the raw amino-acid sequence, 409 residues long: Probable type I inositol 1,4,5-trisphosphate 5-phosphatase (409 aa).

This sequence belongs to the inositol 1,4,5-trisphosphate 5-phosphatase type I family.

The enzyme catalyses 1D-myo-inositol 1,4,5-trisphosphate + H2O = 1D-myo-inositol 1,4-bisphosphate + phosphate. It catalyses the reaction 1D-myo-inositol 1,3,4,5-tetrakisphosphate + H2O = 1D-myo-inositol 1,3,4-trisphosphate + phosphate. The sequence is that of Probable type I inositol 1,4,5-trisphosphate 5-phosphatase (ipp-5) from Caenorhabditis elegans.